Reading from the N-terminus, the 610-residue chain is Putative protein tag-250 (610 aa).

Tudor domains follow at residues 149–260 (VALK…LLPP) and 386–506 (MPMS…KIGG).

The polypeptide is Putative protein tag-250 (tag-250) (Caenorhabditis elegans).